We begin with the raw amino-acid sequence, 591 residues long: Aspartate--tRNA ligase (591 aa).

Glu176 provides a ligand contact to L-aspartate. The segment at 200-203 (QILK) is aspartate. L-aspartate is bound at residue Arg222. ATP is bound by residues 222–224 (RDE) and Gln231. Position 450 (His450) interacts with L-aspartate. Glu484 contributes to the ATP binding site. Arg491 serves as a coordination point for L-aspartate. Position 536-539 (536-539 (GLDR)) interacts with ATP.

The protein belongs to the class-II aminoacyl-tRNA synthetase family. Type 1 subfamily. Homodimer.

The protein localises to the cytoplasm. The catalysed reaction is tRNA(Asp) + L-aspartate + ATP = L-aspartyl-tRNA(Asp) + AMP + diphosphate. Its function is as follows. Catalyzes the attachment of L-aspartate to tRNA(Asp) in a two-step reaction: L-aspartate is first activated by ATP to form Asp-AMP and then transferred to the acceptor end of tRNA(Asp). This chain is Aspartate--tRNA ligase, found in Listeria welshimeri serovar 6b (strain ATCC 35897 / DSM 20650 / CCUG 15529 / CIP 8149 / NCTC 11857 / SLCC 5334 / V8).